Reading from the N-terminus, the 669-residue chain is DNA ligase (669 aa).

Residues 34–38, 83–84, and E114 contribute to the NAD(+) site; these read DAEYD and SL. K116 (N6-AMP-lysine intermediate) is an active-site residue. Positions 137, 171, 287, and 311 each coordinate NAD(+). C405, C408, C423, and C428 together coordinate Zn(2+). The BRCT domain maps to 591-669; the sequence is NVESYFAGKT…EERFLQELNK (79 aa).

This sequence belongs to the NAD-dependent DNA ligase family. LigA subfamily. The cofactor is Mg(2+). It depends on Mn(2+) as a cofactor.

It carries out the reaction NAD(+) + (deoxyribonucleotide)n-3'-hydroxyl + 5'-phospho-(deoxyribonucleotide)m = (deoxyribonucleotide)n+m + AMP + beta-nicotinamide D-nucleotide.. DNA ligase that catalyzes the formation of phosphodiester linkages between 5'-phosphoryl and 3'-hydroxyl groups in double-stranded DNA using NAD as a coenzyme and as the energy source for the reaction. It is essential for DNA replication and repair of damaged DNA. This Bacillus cereus (strain 03BB102) protein is DNA ligase.